Reading from the N-terminus, the 613-residue chain is Chaperone protein dnaK (613 aa).

Belongs to the heat shock protein 70 family.

It is found in the plastid. The protein resides in the chloroplast. Acts as a chaperone. In Phaeodactylum tricornutum (strain CCAP 1055/1), this protein is Chaperone protein dnaK.